The chain runs to 332 residues: MFNAVKADMPDDPMLARRYGQCLELALEACQDTPEQFKLVETPLKSFLLVSNILPQDNRPWHEARSSGRVAEDDYDFSSLALELLPLNPRLPEEWQFGGQGWSSRMEPSQPEMGMGLCFEVFDGDLMRIALAWNKDEVIGQALQILAHSQTWTSLVPEDPLPWMWALFYGPRSHCEERHCVYAAARGKRGPILLPTAVYTPCANIEAFLAHLTRCVYALYLDVRDWKGEDIAPPFDVSRLNKMAKQLCLLPQEPFCITRVCLLCLLHKQNLNAQYKRPVDTYDPCLILTGEAERYMVDAVGNYREASTGTTVLYPTYDLGSIVADMVTYEDE.

At T42 the chain carries Phosphothreonine.

This sequence belongs to the herpesviridae UL95 family. Part of a trimeric complex composed of BGLF3, BFRF2 and BVLF1. Phosphorylation on threonine is necessary for the formation of the trimeric complex, for the expression of vPIC-dependent late genes and production of new virus particles.

Part of the viral pre-initiation complex (vPIC) that is responsible for the expression of vPIC-dependent late genes. vPIC is composed of at least BcRF1 that binds the viral TATT box, BDLF3.5, BDLF4, BFRF2, BGLF3, BGLF4 and BVLF1. This chain is Late gene expression regulator BGLF3, found in Epstein-Barr virus (strain B95-8) (HHV-4).